A 75-amino-acid polypeptide reads, in one-letter code: Putative antitoxin VapB29 (75 aa).

In terms of biological role, possibly the antitoxic component of a type II toxin-antitoxin (TA) system. Its cognate toxin is VapC29 (Potential). The sequence is that of Putative antitoxin VapB29 (vapB29) from Mycobacterium tuberculosis (strain CDC 1551 / Oshkosh).